Here is a 137-residue protein sequence, read N- to C-terminus: Hemoglobin subunit alpha-2 (137 aa).

Positions 1-137 (DDRSHILAIW…VGGSLTSKYR (137 aa)) constitute a Globin domain. His-54 serves as a coordination point for O2. His-83 is a heme b binding site.

The protein belongs to the globin family. In terms of processing, the N-terminus of the mature protein is acetylated. In terms of tissue distribution, red blood cells.

This chain is Hemoglobin subunit alpha-2, found in Telmatobius peruvianus (Andean frog).